We begin with the raw amino-acid sequence, 379 residues long: Succinyl-diaminopimelate desuccinylase (379 aa).

H70 contributes to the Zn(2+) binding site. D72 is an active-site residue. D103 lines the Zn(2+) pocket. E137 serves as the catalytic Proton acceptor. E138, E166, and H352 together coordinate Zn(2+).

The protein belongs to the peptidase M20A family. DapE subfamily. In terms of assembly, homodimer. It depends on Zn(2+) as a cofactor. Co(2+) is required as a cofactor.

The enzyme catalyses N-succinyl-(2S,6S)-2,6-diaminopimelate + H2O = (2S,6S)-2,6-diaminopimelate + succinate. It functions in the pathway amino-acid biosynthesis; L-lysine biosynthesis via DAP pathway; LL-2,6-diaminopimelate from (S)-tetrahydrodipicolinate (succinylase route): step 3/3. In terms of biological role, catalyzes the hydrolysis of N-succinyl-L,L-diaminopimelic acid (SDAP), forming succinate and LL-2,6-diaminopimelate (DAP), an intermediate involved in the bacterial biosynthesis of lysine and meso-diaminopimelic acid, an essential component of bacterial cell walls. The polypeptide is Succinyl-diaminopimelate desuccinylase (Burkholderia mallei (strain NCTC 10247)).